The sequence spans 36 residues: Pancreatic polypeptide (36 aa).

Tyr36 carries the tyrosine amide modification.

Belongs to the NPY family.

It localises to the secreted. Its function is as follows. Hormone secreted by pancreatic cells that acts as a regulator of pancreatic and gastrointestinal functions probably by signaling through the G protein-coupled receptor NPY4R2. The sequence is that of Pancreatic polypeptide (PPY) from Oryctolagus cuniculus (Rabbit).